Here is a 347-residue protein sequence, read N- to C-terminus: Protein YIPF3 (347 aa).

Residues 1 to 31 (MATPAAPASGVRNGAGPEWGGFEENIQGGGS) are disordered. A2 is subject to N-acetylalanine; in Protein YIPF3, N-terminally processed. At 2 to 145 (ATPAAPASGV…PIKMVNFPQK (144 aa)) the chain is on the cytoplasmic side. A helical transmembrane segment spans residues 146–166 (VAGELYGPLMLVFTLVAILLH). Residues 167–184 (GMKTSDTIIREGTLMGTA) lie on the Lumenal side of the membrane. Residues 185-205 (IGTCFGYWLGVSSFIYFLAYL) traverse the membrane as a helical segment. Residues 206 to 211 (CNAQIT) are Cytoplasmic-facing. A helical transmembrane segment spans residues 212-234 (MLQMLALLGYGLFGHCIVLFITY). At 235–237 (NIH) the chain is on the lumenal side. A helical membrane pass occupies residues 238–260 (LHALFYLFWLLVGGLSTLRMVAV). The Cytoplasmic segment spans residues 261–271 (LVSRTVGPTQR). The helical transmembrane segment at 272 to 292 (LLLCGTLAALHMLFLLYLHFA) threads the bilayer. Over 293-347 (YHKVVEGILDTLEGPNIPPMQRVPRDIPAVLPAARLPVAVINATAKAIAVTLQSH) the chain is Lumenal. Residue N334 is glycosylated (N-linked (GlcNAc...) asparagine).

The protein belongs to the YIP1 family. As to quaternary structure, interacts with YIPF4 and YIPF5. As to expression, expressed by splenocytes (at protein level).

It is found in the cell membrane. The protein localises to the golgi apparatus. Its subcellular location is the cis-Golgi network membrane. It localises to the cytoplasm. Its function is as follows. Involved in the maintenance of the Golgi structure. May play a role in hematopoiesis. This is Protein YIPF3 (Yipf3) from Mus musculus (Mouse).